A 44-amino-acid polypeptide reads, in one-letter code: Opistoporin-2 (44 aa).

In terms of tissue distribution, expressed by the venom gland.

Its subcellular location is the secreted. It localises to the target cell membrane. In terms of biological role, at high concentrations, acts as a pore former in cellular membranes and causes the leakage of the cells. At submicromolar concentrations, degranulates granulocytes and has a weak hemolytic activity against human erythrocytes. Also strongly inhibits the production of superoxide anions. Has a strong antibacterial activity against Gram-negative bacteria but is less active against Gram-positive bacteria. Also has antifungal activity. The chain is Opistoporin-2 from Opistophthalmus carinatus (African yellow leg scorpion).